The sequence spans 396 residues: Endo-1,4-beta-xylanase A (396 aa).

Residues Met-1–Ala-28 form the signal peptide. One can recognise a GH10 domain in the interval Ala-51–Asp-396. The Proton donor role is filled by Glu-195. Glu-301 (nucleophile) is an active-site residue.

This sequence belongs to the glycosyl hydrolase 10 (cellulase F) family.

It localises to the secreted. It carries out the reaction Endohydrolysis of (1-&gt;4)-beta-D-xylosidic linkages in xylans.. It functions in the pathway glycan degradation; xylan degradation. The polypeptide is Endo-1,4-beta-xylanase A (xynA) (Halalkalibacterium halodurans (strain ATCC BAA-125 / DSM 18197 / FERM 7344 / JCM 9153 / C-125) (Bacillus halodurans)).